The chain runs to 407 residues: Fructose-1,6-bisphosphatase, chloroplastic (407 aa).

Residues 1-50 (MAAATASSQLIFSKPYSPSRLCPFQLCVFDAKSVLSSSRRKHVNGSGVRC) constitute a chloroplast transit peptide. Residues glutamate 126, glutamate 155, aspartate 176, leucine 178, and aspartate 179 each contribute to the Mg(2+) site. 179 to 182 (DGSS) contributes to the substrate binding site. A disulfide bond links cysteine 203 and cysteine 223. Asparagine 287, tyrosine 319, tyrosine 337, tyrosine 339, and lysine 349 together coordinate substrate. Glutamate 355 provides a ligand contact to Mg(2+).

It belongs to the FBPase class 1 family. In terms of assembly, homotetramer. The cofactor is Mg(2+).

The protein localises to the plastid. Its subcellular location is the chloroplast stroma. The enzyme catalyses beta-D-fructose 1,6-bisphosphate + H2O = beta-D-fructose 6-phosphate + phosphate. Its pathway is carbohydrate biosynthesis; Calvin cycle. The polypeptide is Fructose-1,6-bisphosphatase, chloroplastic (FBP) (Pisum sativum (Garden pea)).